The following is a 279-amino-acid chain: MSAIIELKKVTFNYHKDQEKPTLDGVSFHVKQGEWLSIIGHNGSGKSTTIRLIDGLLEPESGSVIVDGDLLTITNVWEIRHKIGMVFQNPDNQFVGATVEDDVAFGLENKGIAHEDIKERVNHALELVGMQNFKEKEPARLSGGQKQRVAIAGAVAMKPKIIILDEATSMLDPKGRLELIKTIKNIRDDYQLTVISITHDLDEVALSDRVLVMKDGQVESTSTPEQLFARGDELLQLGLDIPFTTSVVQMLQEEGYPVDYGYLTEKELENQLCQLISKM.

The ABC transporter domain maps to 5–240 (IELKKVTFNY…GDELLQLGLD (236 aa)). 40–47 (GHNGSGKS) is a binding site for ATP.

Belongs to the ABC transporter superfamily. Energy-coupling factor EcfA family. In terms of assembly, forms a stable energy-coupling factor (ECF) transporter complex composed of 2 membrane-embedded substrate-binding proteins (S component), 2 ATP-binding proteins (A component) and 2 transmembrane proteins (T component).

The protein resides in the cell membrane. ATP-binding (A) component of a common energy-coupling factor (ECF) ABC-transporter complex. Unlike classic ABC transporters this ECF transporter provides the energy necessary to transport a number of different substrates. In Streptococcus pyogenes serotype M12 (strain MGAS2096), this protein is Energy-coupling factor transporter ATP-binding protein EcfA1.